Here is a 389-residue protein sequence, read N- to C-terminus: Sulfate adenylyltransferase (389 aa).

Belongs to the sulfate adenylyltransferase family.

It carries out the reaction sulfate + ATP + H(+) = adenosine 5'-phosphosulfate + diphosphate. Its pathway is sulfur metabolism; hydrogen sulfide biosynthesis; sulfite from sulfate: step 1/3. The polypeptide is Sulfate adenylyltransferase (Desulforamulus reducens (strain ATCC BAA-1160 / DSM 100696 / MI-1) (Desulfotomaculum reducens)).